The following is a 414-amino-acid chain: Putative truncated GMC-type inactive oxidoreductase R832 (414 aa).

The first 20 residues, 1–20 (MNPTKLFLVFVAFAFAIINA), serve as a signal peptide directing secretion. 38-67 (DYIIVGSGPGGSRAVQQCIAKGHKCTLVER) is a binding site for FAD.

This sequence belongs to the GMC oxidoreductase family. FAD is required as a cofactor.

This is Putative truncated GMC-type inactive oxidoreductase R832 from Acanthamoeba polyphaga (Amoeba).